We begin with the raw amino-acid sequence, 141 residues long: Large ribosomal subunit protein uL11 (141 aa).

It belongs to the universal ribosomal protein uL11 family. As to quaternary structure, part of the ribosomal stalk of the 50S ribosomal subunit. Interacts with L10 and the large rRNA to form the base of the stalk. L10 forms an elongated spine to which L12 dimers bind in a sequential fashion forming a multimeric L10(L12)X complex. In terms of processing, one or more lysine residues are methylated.

Functionally, forms part of the ribosomal stalk which helps the ribosome interact with GTP-bound translation factors. The sequence is that of Large ribosomal subunit protein uL11 from Desulfotalea psychrophila (strain LSv54 / DSM 12343).